A 64-amino-acid chain; its full sequence is Large ribosomal subunit protein bL35 (64 aa).

This sequence belongs to the bacterial ribosomal protein bL35 family.

The polypeptide is Large ribosomal subunit protein bL35 (Levilactobacillus brevis (strain ATCC 367 / BCRC 12310 / CIP 105137 / JCM 1170 / LMG 11437 / NCIMB 947 / NCTC 947) (Lactobacillus brevis)).